The sequence spans 497 residues: MSQIPETSDIVLIGAGIMSATLGTVLKELEPSLSVTMFETLHDCGQESSQAWNNAGTGHAANCELNYTPQRSDGSVDISKALEVNTEFDISRQLWAHLVGKGAIPDPRAFLHPCPHMSFVWGDDNVAFLRQRHREMAAHHCYHGMEFSEDPAQIAAWAPLIIEGREPGQPIAATRIISGADVDYGALTHLLVKQLQAQSGFSVHYKHRVVALARGADGRWLVTVENVTTYERSTTSARFVFAGAGGGSLDILQKSGIPEGNGYAGFPVSGIWLRCDVDDISARHHAKVYGKAAHGSPPMSVPHLDTRIIGGKRSLLFGPYAGFSSKFLKHGSYADLLRSIEPGNILPMLAVARDDWQLSEYLIGQVLQTSEHQFAALQGFFPRAQREDWQRAVAGQRVQIIKPDPQHTGVLEFGTELLASADKSFVALLGASPGASTAAFIAMEVLQKCFDDRLTPDAWLGRLKQMIPTYGIDLKKDADACRDSRAKTAKVLQLDFV.

This sequence belongs to the MQO family. FAD is required as a cofactor.

The enzyme catalyses (S)-malate + a quinone = a quinol + oxaloacetate. The protein operates within carbohydrate metabolism; tricarboxylic acid cycle; oxaloacetate from (S)-malate (quinone route): step 1/1. The protein is Probable malate:quinone oxidoreductase of Rhodopseudomonas palustris (strain TIE-1).